A 953-amino-acid chain; its full sequence is Isoleucine--tRNA ligase (953 aa).

Residues 58–68 carry the 'HIGH' region motif; sequence PYANGSIHIGH. Glutamate 577 provides a ligand contact to L-isoleucyl-5'-AMP. The short motif at 618–622 is the 'KMSKS' region element; it reads KMSKS. Residue lysine 621 coordinates ATP. Cysteine 916, cysteine 919, cysteine 936, and cysteine 939 together coordinate Zn(2+).

The protein belongs to the class-I aminoacyl-tRNA synthetase family. IleS type 1 subfamily. Monomer. Requires Zn(2+) as cofactor.

It localises to the cytoplasm. It catalyses the reaction tRNA(Ile) + L-isoleucine + ATP = L-isoleucyl-tRNA(Ile) + AMP + diphosphate. In terms of biological role, catalyzes the attachment of isoleucine to tRNA(Ile). As IleRS can inadvertently accommodate and process structurally similar amino acids such as valine, to avoid such errors it has two additional distinct tRNA(Ile)-dependent editing activities. One activity is designated as 'pretransfer' editing and involves the hydrolysis of activated Val-AMP. The other activity is designated 'posttransfer' editing and involves deacylation of mischarged Val-tRNA(Ile). The protein is Isoleucine--tRNA ligase of Aeromonas salmonicida (strain A449).